A 523-amino-acid polypeptide reads, in one-letter code: Cyclin-dependent kinase 17 (523 aa).

The residue at position 9 (serine 9) is a Phosphoserine. Residues 30–55 are disordered; the sequence is TIEESSSKDNEPIVKNGRPPTSHSVH. Phosphoserine occurs at positions 80, 92, and 105. Positions 103–123 are disordered; it reads MGSDGESDQASGTSSDEVQSP. Residues 110–123 are compositionally biased toward polar residues; sequence DQASGTSSDEVQSP. Residues serine 137, serine 146, serine 165, and serine 180 each carry the phosphoserine modification. The Protein kinase domain maps to 192 to 473; that stretch reads YIKLEKLGEG…AEEAMKHVYF (282 aa). Residues 198–206 and lysine 221 contribute to the ATP site; that span reads LGEGTYATV. The active-site Proton acceptor is aspartate 313. The tract at residues 501-523 is disordered; the sequence is PGFRNSSYPETGHGKNRRQSMLF. Positions 514–523 are enriched in basic residues; it reads GKNRRQSMLF.

The protein belongs to the protein kinase superfamily. CMGC Ser/Thr protein kinase family. CDC2/CDKX subfamily. Found in a complex containing CABLES1, CDK16 and TDRD7. Interacts with TDRD7.

It carries out the reaction L-seryl-[protein] + ATP = O-phospho-L-seryl-[protein] + ADP + H(+). It catalyses the reaction L-threonyl-[protein] + ATP = O-phospho-L-threonyl-[protein] + ADP + H(+). Functionally, may play a role in terminally differentiated neurons. Has a Ser/Thr-phosphorylating activity for histone H1. The protein is Cyclin-dependent kinase 17 (Cdk17) of Mus musculus (Mouse).